The chain runs to 568 residues: Methyl-accepting chemotaxis protein CtpH (568 aa).

Residues Met1 to Gln39 lie on the Cytoplasmic side of the membrane. A helical transmembrane segment spans residues Ile40–Gly60. Topologically, residues Ser61–Leu216 are periplasmic. Residues Leu217–Val237 traverse the membrane as a helical segment. Residues Asn238–Ala568 are Cytoplasmic-facing. The region spanning Arg239–Asp291 is the HAMP domain. The 237-residue stretch at Ser296–Ala532 folds into the Methyl-accepting transducer domain.

This sequence belongs to the methyl-accepting chemotaxis (MCP) protein family.

Its subcellular location is the cell inner membrane. Chemotactic-signal transducers respond to changes in the concentration of attractants and repellents in the environment, transduce a signal from the outside to the inside of the cell, and facilitate sensory adaptation through the variation of the level of methylation. Chemoreceptor for inorganic phosphate, which is required for taxis at high concentrations of phosphate. Recognizes inorganic phosphate directly. Can also bind to other components that have a pyrophosphate group, including ATP and ADP. The chain is Methyl-accepting chemotaxis protein CtpH from Pseudomonas aeruginosa (strain ATCC 15692 / DSM 22644 / CIP 104116 / JCM 14847 / LMG 12228 / 1C / PRS 101 / PAO1).